We begin with the raw amino-acid sequence, 662 residues long: Acetyl-coenzyme A synthetase (662 aa).

CoA-binding positions include 197–200 (RKGK) and T317. Residues 393 to 395 (GEP), 417 to 422 (DTWWQT), D510, and R525 contribute to the ATP site. S533 is a CoA binding site. Position 536 (R536) interacts with ATP. Mg(2+) contacts are provided by H549 and V552. K623 bears the N6-acetyllysine mark.

It belongs to the ATP-dependent AMP-binding enzyme family. Mg(2+) is required as a cofactor. Post-translationally, acetylated. Deacetylation by the SIR2-homolog deacetylase activates the enzyme.

The catalysed reaction is acetate + ATP + CoA = acetyl-CoA + AMP + diphosphate. Its function is as follows. Catalyzes the conversion of acetate into acetyl-CoA (AcCoA), an essential intermediate at the junction of anabolic and catabolic pathways. AcsA undergoes a two-step reaction. In the first half reaction, AcsA combines acetate with ATP to form acetyl-adenylate (AcAMP) intermediate. In the second half reaction, it can then transfer the acetyl group from AcAMP to the sulfhydryl group of CoA, forming the product AcCoA. This is Acetyl-coenzyme A synthetase from Helicobacter pylori (strain P12).